Reading from the N-terminus, the 286-residue chain is Probable aquaporin PIP-type pTOM75 (286 aa).

Residues 1–35 are disordered; that stretch reads MAENKEEDVKLGANKFRETQPLGTAAQTDKDYKEP. Residues 1–55 lie on the Cytoplasmic side of the membrane; sequence MAENKEEDVKLGANKFRETQPLGTAAQTDKDYKEPPPAPLFEPGELSSWSFYRAG. The segment covering 7–18 has biased composition (basic and acidic residues); sequence EDVKLGANKFRE. A helical membrane pass occupies residues 56-76; that stretch reads IAEFMATFLFLYITILTVMGL. At 77-89 the chain is on the extracellular side; sequence KRSDSLCSSVGIQ. Residues 90 to 110 traverse the membrane as a helical segment; the sequence is GVAWAFGGMIFALVYCTAGIS. The Cytoplasmic segment spans residues 111-133; that stretch reads GGHINPAVTFGLFLARKLSLTRA. Positions 115 to 117 match the NPA 1 motif; sequence NPA. A helical transmembrane segment spans residues 134-154; sequence VFYMVMQCLGAICGAGVVKGF. Residues 155–175 lie on the Extracellular side of the membrane; that stretch reads MVGPYQRLGGGANVVNPGYTK. Residues 176-196 traverse the membrane as a helical segment; the sequence is GDGLGAEIIGTFVLVYTVFSA. The Cytoplasmic segment spans residues 197–209; it reads TDAKRNARDSHVP. A helical transmembrane segment spans residues 210-230; it reads ILAPLPIGFAVFLVHLATIPI. At 231-257 the chain is on the extracellular side; the sequence is TGTGINPARSLGAAIIYNDEHAWNDHW. The NPA 2 signature appears at 236–238; it reads NPA. A helical membrane pass occupies residues 258–278; that stretch reads IFWVGPMIGAALAAIYHQIII. The Cytoplasmic segment spans residues 279–286; that stretch reads RAMPFHRS.

Belongs to the MIP/aquaporin (TC 1.A.8) family. PIP (TC 1.A.8.11) subfamily. Roots, ripening fruit and senescing leaves.

The protein resides in the cell membrane. Functionally, aquaporins facilitate the transport of water and small neutral solutes across cell membranes. The polypeptide is Probable aquaporin PIP-type pTOM75 (Solanum lycopersicum (Tomato)).